Consider the following 947-residue polypeptide: Valine--tRNA ligase (947 aa).

Positions 45–55 (PNVTGSLHMGH) match the 'HIGH' region motif. Positions 591–595 (KMSKS) match the 'KMSKS' region motif. Residue Lys594 participates in ATP binding.

This sequence belongs to the class-I aminoacyl-tRNA synthetase family. ValS type 1 subfamily. In terms of assembly, monomer.

The protein localises to the cytoplasm. It carries out the reaction tRNA(Val) + L-valine + ATP = L-valyl-tRNA(Val) + AMP + diphosphate. Catalyzes the attachment of valine to tRNA(Val). As ValRS can inadvertently accommodate and process structurally similar amino acids such as threonine, to avoid such errors, it has a 'posttransfer' editing activity that hydrolyzes mischarged Thr-tRNA(Val) in a tRNA-dependent manner. The chain is Valine--tRNA ligase from Rhizobium meliloti (strain 1021) (Ensifer meliloti).